The sequence spans 282 residues: Protease HtpX homolog (282 aa).

Helical transmembrane passes span 7-26 (TTVL…GAVG) and 30-49 (GMMI…YWFS). Residue histidine 131 participates in Zn(2+) binding. The active site involves glutamate 132. Residue histidine 135 participates in Zn(2+) binding. 2 helical membrane passes run 141-161 (ILVS…ARMA) and 183-203 (LGLV…QLAI). Glutamate 208 provides a ligand contact to Zn(2+).

The protein belongs to the peptidase M48B family. Requires Zn(2+) as cofactor.

Its subcellular location is the cell inner membrane. The polypeptide is Protease HtpX homolog (Syntrophobacter fumaroxidans (strain DSM 10017 / MPOB)).